Reading from the N-terminus, the 128-residue chain is Small ribosomal subunit protein uS9 (128 aa).

The interval 106–128 (SRKVERKKPGRPKARKKFQFSKR) is disordered. The segment covering 109 to 128 (VERKKPGRPKARKKFQFSKR) has biased composition (basic residues).

This sequence belongs to the universal ribosomal protein uS9 family.

This Azobacteroides pseudotrichonymphae genomovar. CFP2 protein is Small ribosomal subunit protein uS9.